The chain runs to 1671 residues: Hybrid signal transduction protein dokA (1671 aa).

A compositionally biased stretch (basic and acidic residues) spans 1–10 (MSSPHIELHS). 6 disordered regions span residues 1-27 (MSSP…ELTG), 42-89 (DDLN…DKND), 126-241 (QQQQ…RRSS), 365-451 (YSNN…NNEE), 579-603 (HNHN…SPFI), and 629-651 (SNSS…SSNA). Polar residues predominate over residues 11 to 27 (QRTLSPQPSSNNFELTG). 2 stretches are compositionally biased toward low complexity: residues 45 to 83 (NNNN…NNNN) and 126 to 167 (QQQQ…QQQE). Residues 168–179 (QEQEQEQEQEQE) show a composition bias toward acidic residues. The segment covering 367–449 (NNNNNTNTNN…NNNNNNNNNN (83 aa)) has biased composition (low complexity). Positions 591–600 (TTQRASSTDS) are enriched in polar residues. Positions 1050–1276 (NISHELRTPC…TFWFAIKVSI (227 aa)) constitute a Histidine kinase domain. The Response regulatory domain occupies 1519 to 1633 (YILVAEDNDI…RLQKTLSDWI (115 aa)).

Post-translationally, under osmotic stress conditions, this protein undergoes phosphorylation at a serine residue in the kinase core, which is not due to an autophosphorylation of dokA. This is in contrast to the classic two-component paradigm, which predicts only histidine and aspartate phosphorylation.

Functionally, part of the osmoregulatory pathway which leads to the increase of intracellular cAMP concentration in response to hyperosmotic stress. Thought to negatively regulate the rdeA-regA pathway by acting as a phosphatase towards the HPt protein rdeA. Has probably no histidine kinase activity. This Dictyostelium discoideum (Social amoeba) protein is Hybrid signal transduction protein dokA (dokA).